A 260-amino-acid chain; its full sequence is Putative ABC transporter substrate-binding lipoprotein YvgL (260 aa).

The first 20 residues, 1–20 (MFKKYSIFIAALTAFLLVAG), serve as a signal peptide directing secretion. Residue cysteine 21 is the site of N-palmitoyl cysteine attachment. Cysteine 21 is lipidated: S-diacylglycerol cysteine. Residues serine 43, serine 71, alanine 151, valine 178, and tyrosine 196 each coordinate molybdate.

The protein belongs to the bacterial solute-binding protein ModA family.

It is found in the cell membrane. The protein is Putative ABC transporter substrate-binding lipoprotein YvgL (yvgL) of Bacillus subtilis (strain 168).